The sequence spans 104 residues: Urease subunit beta (104 aa).

The protein belongs to the urease beta subunit family. As to quaternary structure, heterotrimer of UreA (gamma), UreB (beta) and UreC (alpha) subunits. Three heterotrimers associate to form the active enzyme.

It is found in the cytoplasm. The enzyme catalyses urea + 2 H2O + H(+) = hydrogencarbonate + 2 NH4(+). It participates in nitrogen metabolism; urea degradation; CO(2) and NH(3) from urea (urease route): step 1/1. This chain is Urease subunit beta, found in Methylocella silvestris (strain DSM 15510 / CIP 108128 / LMG 27833 / NCIMB 13906 / BL2).